Reading from the N-terminus, the 116-residue chain is Venom protein 54.1 (116 aa).

Positions 1–19 (MNFQVFSLIFFNFVYYCSC) are cleaved as a signal peptide.

Contains 3 disulfide bonds. Expressed by the venom gland.

Its subcellular location is the secreted. The polypeptide is Venom protein 54.1 (Lychas mucronatus (Chinese swimming scorpion)).